Here is a 397-residue protein sequence, read N- to C-terminus: Elongation factor Tu 2 (397 aa).

The tr-type G domain occupies 10-206 (KPHVNIGTIG…AIDTWIPEPV (197 aa)). Residues 19 to 26 (GHVDHGKT) form a G1 region. 19 to 26 (GHVDHGKT) is a GTP binding site. Residue Thr-26 coordinates Mg(2+). The interval 61-65 (GITIS) is G2. The G3 stretch occupies residues 82–85 (DCPG). Residues 82 to 86 (DCPGH) and 137 to 140 (NKCD) contribute to the GTP site. The segment at 137–140 (NKCD) is G4. The G5 stretch occupies residues 175 to 177 (SAL).

Belongs to the TRAFAC class translation factor GTPase superfamily. Classic translation factor GTPase family. EF-Tu/EF-1A subfamily. Monomer.

The protein resides in the cytoplasm. It carries out the reaction GTP + H2O = GDP + phosphate + H(+). Its function is as follows. GTP hydrolase that promotes the GTP-dependent binding of aminoacyl-tRNA to the A-site of ribosomes during protein biosynthesis. In Alkaliphilus metalliredigens (strain QYMF), this protein is Elongation factor Tu 2.